A 355-amino-acid polypeptide reads, in one-letter code: Isopentenyl-diphosphate delta-isomerase (355 aa).

Arginine 12–lysine 13 is a binding site for substrate. FMN contacts are provided by residues serine 70, serine 71 to threonine 73, serine 101, and asparagine 130. Residue serine 101–arginine 103 coordinates substrate. Glutamine 165 contributes to the substrate binding site. A Mg(2+)-binding site is contributed by glutamate 166. FMN is bound by residues lysine 197 and alanine 308 to glycine 309.

The protein belongs to the IPP isomerase type 2 family. As to quaternary structure, homooctamer. Dimer of tetramers. The cofactor is FMN. It depends on NADPH as a cofactor. Mg(2+) is required as a cofactor.

Its subcellular location is the cytoplasm. The enzyme catalyses isopentenyl diphosphate = dimethylallyl diphosphate. Functionally, involved in the biosynthesis of isoprenoids. Catalyzes the 1,3-allylic rearrangement of the homoallylic substrate isopentenyl (IPP) to its allylic isomer, dimethylallyl diphosphate (DMAPP). In Chlorobium phaeovibrioides (strain DSM 265 / 1930) (Prosthecochloris vibrioformis (strain DSM 265)), this protein is Isopentenyl-diphosphate delta-isomerase.